Reading from the N-terminus, the 823-residue chain is Dimethyl sulfoxide/trimethylamine N-oxide reductase (823 aa).

A signal peptide (tat-type signal) is located at residues 1-42; it reads MTKFSGNELRAELYRRAFLSYSVAPGALGMFGRSLLAKGARA. Mo-bis(molybdopterin guanine dinucleotide) is bound by residues 156 to 160, tryptophan 158, serine 189, 232 to 233, 262 to 263, 283 to 285, 364 to 365, arginine 368, asparagine 476, histidine 480, 500 to 501, arginine 523, aspartate 553, 685 to 686, 691 to 693, asparagine 779, and 796 to 797; these read YGWKS, KT, ID, QTD, WS, HD, HP, HSQ, and GQ.

As to quaternary structure, homodimer. It depends on Mo-bis(molybdopterin guanine dinucleotide) as a cofactor. In terms of processing, predicted to be exported by the Tat system. The position of the signal peptide cleavage has been experimentally proven.

Its subcellular location is the periplasm. The catalysed reaction is dimethyl sulfide + a menaquinone + H2O = dimethyl sulfoxide + a menaquinol. It catalyses the reaction trimethylamine + 2 Fe(III)-[cytochrome c] + H2O = trimethylamine N-oxide + 2 Fe(II)-[cytochrome c] + 3 H(+). Its function is as follows. Catalyzes the reduction of dimethyl sulfoxide (DMSO) and trimethylamine N-oxide (TMAO) to dimethyl sulfide (DMS) and trimethylamine, respectively. The terminal DMSO reductase can also use various sulfoxides and N-oxide compounds as terminal electron acceptor in addition to DMSO and TMAO. This is Dimethyl sulfoxide/trimethylamine N-oxide reductase (dorA) from Rhodobacter capsulatus (Rhodopseudomonas capsulata).